We begin with the raw amino-acid sequence, 130 residues long: Large ribosomal subunit protein bL21 (130 aa).

The segment at 110 to 130 is disordered; it reads TAPTATEETADATPDTETAAE.

This sequence belongs to the bacterial ribosomal protein bL21 family. In terms of assembly, part of the 50S ribosomal subunit. Contacts protein L20.

Functionally, this protein binds to 23S rRNA in the presence of protein L20. This Nostoc sp. (strain PCC 7120 / SAG 25.82 / UTEX 2576) protein is Large ribosomal subunit protein bL21.